A 396-amino-acid chain; its full sequence is G-protein coupled receptor 84 (396 aa).

The Extracellular portion of the chain corresponds to 1 to 26 (MWNASDVNFSCYHESVLGYRYVAVSW). 2 N-linked (GlcNAc...) asparagine glycosylation sites follow: N3 and N8. The helical transmembrane segment at 27–47 (GIVVAVTGTVGNVLTLLALAI) threads the bilayer. Topologically, residues 48–57 (QPKLRTRFNL) are cytoplasmic. Residues 58–78 (LIANLTVADLLYCTLLQPFSV) traverse the membrane as a helical segment. The Extracellular segment spans residues 79 to 94 (DTYLHLHWRTGATFCQ). A helical transmembrane segment spans residues 95–115 (IFGFLLFVSNSVSILTLCLIA). The Cytoplasmic portion of the chain corresponds to 116–144 (LGRYLLIAHPKLFPQVFSAKGIVLALVST). The helical transmembrane segment at 145–165 (WVVAVASFAPLWPIYILVPVV) threads the bilayer. Residues 166–180 (CTCSFDRIRGQPYTT) lie on the Extracellular side of the membrane. Residues 181 to 201 (ILMGIYFVVGLSSVGVFYCLI) form a helical membrane-spanning segment. The Cytoplasmic portion of the chain corresponds to 202 to 320 (HQQVKRAAQA…PSEFGKVTRM (119 aa)). Residues S221 and S224 each carry the phosphoserine modification. A disordered region spans residues 243-310 (SGLASGGPSE…TKGAQRAQDS (68 aa)). Phosphothreonine occurs at positions 263 and 264. The helical transmembrane segment at 321-341 (CFAVFLCFTLSYIPFLLLNIL) threads the bilayer. The Extracellular portion of the chain corresponds to 342–352 (DAKVQAPRVVH). A helical membrane pass occupies residues 353 to 373 (MLAANLTWLNGCINPVLYAAM). Over 374 to 396 (NRQFRQAYGSLLRRGPQSFHRFH) the chain is Cytoplasmic.

It belongs to the G-protein coupled receptor 1 family. As to quaternary structure, interacts with ARRB2 and ARR3. Phosphorylated by a subset of GPR84-activating ligands. Constitutively phosphorylated at Ser-221 and Ser-224 in the absence of 2-HTP. By contrast, Thr-263 and Thr-264 are phosphorylated only following prior cell treatment with 2-HTP.

Its subcellular location is the cell membrane. Its function is as follows. G protein-coupled receptor that responds endogenously to dietary fatty acids or nutrient, specifically medium-chain free fatty acid (FFA) with carbon chain lengths of C9 to C14. Capric acid (C10:0), undecanoic acid (C11:0) and lauric acid (C12:0) are the most potent agonists. In immune cells, functions as a pro-inflammatory receptor via 6-OAU and promotes the expression of pro-inflammatory mediators such as TNFalpha, IL-6 and IL-12B as well as stimulating chemotactic responses through activation of signaling mediators AKT, ERK and NF-kappa-B. In addition, triggers increased bacterial adhesion and phagocytosis in macrophages and regulates pro-inflammatory function via enhancing NLRP3 inflammasome activation. Also plays an important role in inflammation by modulating neutrophil functions. Mechanistically, promotes neutrophil chemotaxis, reactive oxygen species (ROS) production and degranulation via LYN-AKT/ERK pathway. To regulate ROS, communicates with the two formyl peptide receptors FPR2 and FPR1 to control the NADPH oxidase activity in neutrophils. In Bos taurus (Bovine), this protein is G-protein coupled receptor 84 (GPR84).